Reading from the N-terminus, the 152-residue chain is Phospholipase A2 pkP2 (152 aa).

The signal sequence occupies residues 1–21 (MNPAHLLVLLAVCVSLLGASA). Positions 22–27 (IPPLPL) are excised as a propeptide. 7 disulfides stabilise this stretch: C38–C104, C54–C151, C56–C72, C71–C132, C78–C125, C88–C118, and C111–C123. Residues Y55, G57, and G59 each contribute to the Ca(2+) site. The active site involves H75. D76 serves as a coordination point for Ca(2+). D126 is an active-site residue.

The protein belongs to the phospholipase A2 family. Group I subfamily. It depends on Ca(2+) as a cofactor.

The protein localises to the secreted. It catalyses the reaction a 1,2-diacyl-sn-glycero-3-phosphocholine + H2O = a 1-acyl-sn-glycero-3-phosphocholine + a fatty acid + H(+). In terms of biological role, PA2 catalyzes the calcium-dependent hydrolysis of the 2-acyl groups in 3-sn-phosphoglycerides. The chain is Phospholipase A2 pkP2 from Laticauda semifasciata (Black-banded sea krait).